The sequence spans 407 residues: Na(+)-translocating NADH-quinone reductase subunit F (407 aa).

Residues 3–23 (ITLGIAMFTVIVLALAVLILF) form a helical membrane-spanning segment. The 95-residue stretch at 32 to 126 (GDITIEINDD…SMKIELPEEV (95 aa)) folds into the 2Fe-2S ferredoxin-type domain. Residues Cys-69, Cys-75, Cys-78, and Cys-110 each contribute to the [2Fe-2S] cluster site. The region spanning 129-269 (VKKWECTVIS…SGPFGEFFAK (141 aa)) is the FAD-binding FR-type domain.

The protein belongs to the NqrF family. Composed of six subunits; NqrA, NqrB, NqrC, NqrD, NqrE and NqrF. Requires [2Fe-2S] cluster as cofactor. FAD is required as a cofactor.

It is found in the cell inner membrane. It catalyses the reaction a ubiquinone + n Na(+)(in) + NADH + H(+) = a ubiquinol + n Na(+)(out) + NAD(+). Its function is as follows. NQR complex catalyzes the reduction of ubiquinone-1 to ubiquinol by two successive reactions, coupled with the transport of Na(+) ions from the cytoplasm to the periplasm. The first step is catalyzed by NqrF, which accepts electrons from NADH and reduces ubiquinone-1 to ubisemiquinone by a one-electron transfer pathway. This Histophilus somni (strain 129Pt) (Haemophilus somnus) protein is Na(+)-translocating NADH-quinone reductase subunit F.